Consider the following 397-residue polypeptide: MLFIRQLSVIPKAPAFAKFFHTAGLVRQKLSDPNHLAILLQKNLAQRNSSLYNPELETIRCTIFDRHGNMQKPSIDLRRDELIHTHGLLPRDLRKVEKSRRNDLVPSVLVRENSILVSILNIRALVKSDMLILFDSMGIKLDSVSQQNFIADLQLRLQNRSGFEVPDVVNKDPLPYEFRAVESIFISAISNLNAELKVHLNVSTGILQDLEYSITRDKLRYLLIQNKKLSVFHKKSFLMREMIEELLEQDDVLCEMYLTEKQLGKPREEHDHAEIEMLLETYYNHVDEIVQTVGNTMSNIKTTEEIINIILDSNRNQLMLLGLRFSIGLLSLAGSIFIASIYGMNLENFIEEGNVGFPVVSTLGVILMAYLFAFSVKHLHKLEKVQLMSHGKSSTLK.

The N-terminal 48 residues, 1–48 (MLFIRQLSVIPKAPAFAKFFHTAGLVRQKLSDPNHLAILLQKNLAQRN), are a transit peptide targeting the mitochondrion. The helical transmembrane segment at 318–338 (LMLLGLRFSIGLLSLAGSIFI) threads the bilayer. A YGMN motif is present at residues 342–345 (YGMN). A helical membrane pass occupies residues 355-375 (VGFPVVSTLGVILMAYLFAFS).

The protein belongs to the CorA metal ion transporter (MIT) (TC 1.A.35) family. Forms homooligomers. Interacts with MRS2.

It is found in the mitochondrion inner membrane. Mitochondrial inner membrane magnesium transporter required for mitochondrial magnesium homeostasis. Modulates the conductance of the MRS2 channel. Involved in the splicing of mRNA group II introns in mitochondria by affecting mitochondrial magnesium concentrations, which are critical for group II intron splicing. The protein is Mitochondrial inner membrane magnesium transporter LPE10 (LPE10) of Kluyveromyces lactis (strain ATCC 8585 / CBS 2359 / DSM 70799 / NBRC 1267 / NRRL Y-1140 / WM37) (Yeast).